We begin with the raw amino-acid sequence, 172 residues long: NAD(P)H-quinone oxidoreductase subunit I, chloroplastic (172 aa).

4Fe-4S ferredoxin-type domains are found at residues 55 to 84 (GRIHFEFDKCIACEVCVRVCPIDLPVVDWK) and 95 to 124 (LNYSIDFGICIFCGNCVEYCPTNCLSMTEE). [4Fe-4S] cluster contacts are provided by Cys64, Cys67, Cys70, Cys74, Cys104, Cys107, Cys110, and Cys114.

It belongs to the complex I 23 kDa subunit family. In terms of assembly, NDH is composed of at least 16 different subunits, 5 of which are encoded in the nucleus. The cofactor is [4Fe-4S] cluster.

The protein resides in the plastid. It localises to the chloroplast thylakoid membrane. It catalyses the reaction a plastoquinone + NADH + (n+1) H(+)(in) = a plastoquinol + NAD(+) + n H(+)(out). The enzyme catalyses a plastoquinone + NADPH + (n+1) H(+)(in) = a plastoquinol + NADP(+) + n H(+)(out). NDH shuttles electrons from NAD(P)H:plastoquinone, via FMN and iron-sulfur (Fe-S) centers, to quinones in the photosynthetic chain and possibly in a chloroplast respiratory chain. The immediate electron acceptor for the enzyme in this species is believed to be plastoquinone. Couples the redox reaction to proton translocation, and thus conserves the redox energy in a proton gradient. The sequence is that of NAD(P)H-quinone oxidoreductase subunit I, chloroplastic from Olimarabidopsis pumila (Dwarf rocket).